The following is an 877-amino-acid chain: MSSKTVTPMMAQYLEIKQDHADALLFYRMGDFYEMFFDDAVEAAAALDIALTKRGKHDDADIPMCGVPVHAAEGYLLTLIRKGFRVAVCEQMEDPAEAKKRGSKSVVRREVVRLVTPGTLTEASLLEARRHNYLAAFAKVRDDSALAWVDISTGEFRVMACPAARLSVDLARLAPREVLLAEGNDLRSLVEEHEAAATELGRASFDSTAAVDRLCRLYGVADLEAFGSFERADLSAMGAIVGYLELTQKGKLPLLRKPVKERAQHGLQIDAATRRNLELTQSLSGGREGALLTVIDRTVTAQGARLLARRLASPSADLSIIRTRHEGVRYALEAPEILDTVRTALRQVPDMDRALSRLALDRGGPRDLAAIRNGLAQAATLAEALPDDALPPLWAQSKSRFFGHDALRDLLEKALIAEPPLLTRDGGFVASGYNVDLDEARQLRDEGRGVIAGMQAEYAEATGIASLKVKHNNVLGYFIETTATHADKMLSPPLSDRFIHRQTTANAVRFTTVELSEMETRILNAGGRALALEKSIFEELRQAVIVAAAELSDCARALAELDVVTALAVLARDEDWCAPKVDDSRAFEISGGRHPVVEAALRASGTPFIRNDCDLSEGAAPIWLLTGPNMAGKSTFLRQNALIAILAQMGSYVPATAARIGLVAQVFSRVGASDDLARGRSTFMVEMVETAAILNQAGDRALVILDEIGRGTATYDGLSIAWATLEHLHGVNRCRALFATHYHEMTGLAAQLSGVENATVAVKEHDGDVIFLHEVRRGAADRSYGVQVAKLAGLPPSVVARAREVLKTLESGERSGGNPAKALLEDLPLFANAAPPPPPAAPTSALEARLADISPDALSPREALDLVYELKSLADRD.

Gly627–Ser634 provides a ligand contact to ATP.

Belongs to the DNA mismatch repair MutS family.

This protein is involved in the repair of mismatches in DNA. It is possible that it carries out the mismatch recognition step. This protein has a weak ATPase activity. In Dinoroseobacter shibae (strain DSM 16493 / NCIMB 14021 / DFL 12), this protein is DNA mismatch repair protein MutS.